The chain runs to 264 residues: Apolipoprotein A-I (264 aa).

The signal sequence occupies residues 1–18 (MKTVVLAVAVLFLTGSQA). 2 repeat units span residues 67–88 (LNLL…EQLG) and 89–110 (PVTQ…REMN). The 10 X approximate tandem repeats stretch occupies residues 67 to 264 (LNLLENWDTL…EEASKKLNAQ (198 aa)). At Met-109 the chain carries Methionine sulfoxide. The stretch at 111-121 (KDLEEVKAKVQ) is one 3; half-length repeat. Repeat copies occupy residues 122 to 143 (PYLD…QKME), 144 to 165 (PLGA…EKLT), 166 to 187 (PLGE…TKMT), 188 to 207 (PYSD…LKDS), and 208 to 229 (PTLA…EKAK). Position 193 is a methionine sulfoxide (Met-193). The stretch at 230–240 (PALEDLRQGLM) is one 9; half-length repeat. Met-240 is modified (methionine sulfoxide). Repeat 10 spans residues 241 to 264 (PVFESFKTRIMSMVEEASKKLNAQ).

It belongs to the apolipoprotein A1/A4/E family. As to quaternary structure, homodimer. Interacts with APOA1BP and CLU. Component of a sperm activating protein complex (SPAP), consisting of APOA1, an immunoglobulin heavy chain, an immunoglobulin light chain and albumin. Interacts with NDRG1. Interacts with SCGB3A2. Interacts with NAXE and YJEFN3. In terms of processing, glycosylated. Post-translationally, palmitoylated. Phosphorylation sites are present in the extracellular medium. In terms of tissue distribution, major protein of plasma HDL, also found in chylomicrons.

It localises to the secreted. Participates in the reverse transport of cholesterol from tissues to the liver for excretion by promoting cholesterol efflux from tissues and by acting as a cofactor for the lecithin cholesterol acyltransferase (LCAT). As part of the SPAP complex, activates spermatozoa motility. The sequence is that of Apolipoprotein A-I (APOAI) from Mesocricetus auratus (Golden hamster).